Consider the following 258-residue polypeptide: Tryptophan synthase alpha chain (258 aa).

Active-site proton acceptor residues include glutamate 47 and aspartate 58.

Belongs to the TrpA family. As to quaternary structure, tetramer of two alpha and two beta chains.

The catalysed reaction is (1S,2R)-1-C-(indol-3-yl)glycerol 3-phosphate + L-serine = D-glyceraldehyde 3-phosphate + L-tryptophan + H2O. The protein operates within amino-acid biosynthesis; L-tryptophan biosynthesis; L-tryptophan from chorismate: step 5/5. Its function is as follows. The alpha subunit is responsible for the aldol cleavage of indoleglycerol phosphate to indole and glyceraldehyde 3-phosphate. This chain is Tryptophan synthase alpha chain, found in Bacillus mycoides (strain KBAB4) (Bacillus weihenstephanensis).